Consider the following 655-residue polypeptide: E3 ubiquitin-protein ligase TRIM32 (655 aa).

The segment at 21–66 (CPICMESFTEEQLRPKLLHCGHTICRQCLEKLLASSINGVRCPFCS) adopts an RING-type zinc-finger fold. The residue at position 56 (serine 56) is a Phosphoserine; by CHEK2. The segment at 96–139 (VGLLMCRGCGRRLPRQFCRSCGVVLCEPCREADHQPPGHCTLPV) adopts a B box-type; atypical zinc-finger fold. Zn(2+)-binding residues include cysteine 101, cysteine 104, cysteine 124, and histidine 129. Positions 139–198 (VKEAAEERRRDFGEKLTRLRELTGELQRRKAALEGVSRDLQARYKAVLQEYGHEERRIQE) form a coiled coil. The segment at 327–347 (MDMSPEEVAPSPRASPAKQRS) is disordered. Residues serine 330, serine 337, and serine 341 each carry the phosphoserine modification. NHL repeat units lie at residues 360 to 403 (LKKM…FNRK), 417 to 460 (DSFV…YTMD), 461 to 501 (GHCV…FTVD), 564 to 607 (GRQI…FPKG), and 608 to 648 (GGYS…YSYH).

This sequence belongs to the TRIM/RBCC family. It self-associates. Interacts with DTNBP1. Interacts with PIAS4/PIASY upon treatment with UVB and TNF-alpha. Interacts with AMBRA1; promoting activation of ULK1 through unanchored 'Lys-63'-linked polyubiquitin chains. Interacts with TICAM1 and TAX1BP1; these interactions target TICAM1 to TAX1BP1-mediated selective autophagic degradation. Post-translationally, ubiquitinated. In terms of processing, phosphorylation at Ser-56 by CHEK2 under oxidative stress, activates the E3 ligase activity and promotes ATG7 ubiquitination leading to positive regulation of the autophagosme assembly. Ubiquitous. High expression in brain.

It is found in the cytoplasm. The catalysed reaction is S-ubiquitinyl-[E2 ubiquitin-conjugating enzyme]-L-cysteine + [acceptor protein]-L-lysine = [E2 ubiquitin-conjugating enzyme]-L-cysteine + N(6)-ubiquitinyl-[acceptor protein]-L-lysine.. It participates in protein modification; protein ubiquitination. Its function is as follows. E3 ubiquitin ligase that plays a role in various biological processes including neural stem cell differentiation, innate immunity, inflammatory resonse and autophagy. Plays a role in virus-triggered induction of IFN-beta and TNF-alpha by mediating the ubiquitination of STING1. Mechanistically, targets STING1 for 'Lys-63'-linked ubiquitination which promotes the interaction of STING1 with TBK1. Regulates bacterial clearance and promotes autophagy in Mycobacterium tuberculosis-infected macrophages. Negatively regulates TLR3/4-mediated innate immune and inflammatory response by triggering the autophagic degradation of TICAM1 in an E3 activity-independent manner. Plays an essential role in oxidative stress induced cell death by inducing loss of transmembrane potential and enhancing mitochondrial reactive oxygen species (ROS) production during oxidative stress conditions. Ubiquitinates XIAP and targets it for proteasomal degradation. Ubiquitinates DTNBP1 (dysbindin) and promotes its degradation. May ubiquitinate BBS2. Ubiquitinates PIAS4/PIASY and promotes its degradation in keratinocytes treated with UVB and TNF-alpha. Also acts as a regulator of autophagy by mediating formation of unanchored 'Lys-63'-linked polyubiquitin chains that activate ULK1: interaction with AMBRA1 is required for ULK1 activation. Positively regulates dendritic branching by promoting ubiquitination and subsequent degradation of the epigenetic factor CDYL. Under metabolic stress and phosphorylation by CHK2, mediates 'Lys-63'-linked ubiquitination of ATG7 at 'Lys-41' to initiate autophagy. The protein is E3 ubiquitin-protein ligase TRIM32 of Mus musculus (Mouse).